Here is a 206-residue protein sequence, read N- to C-terminus: Putative 3-methyladenine DNA glycosylase (206 aa).

Belongs to the DNA glycosylase MPG family.

This Rhodopseudomonas palustris (strain ATCC BAA-98 / CGA009) protein is Putative 3-methyladenine DNA glycosylase.